The primary structure comprises 435 residues: Enolase (435 aa).

(2R)-2-phosphoglycerate is bound at residue glutamine 163. The Proton donor role is filled by glutamate 205. Mg(2+)-binding residues include aspartate 243, glutamate 292, and aspartate 319. (2R)-2-phosphoglycerate is bound by residues lysine 344, arginine 373, serine 374, and lysine 395. Lysine 344 (proton acceptor) is an active-site residue.

The protein belongs to the enolase family. Requires Mg(2+) as cofactor.

Its subcellular location is the cytoplasm. The protein resides in the secreted. It localises to the cell surface. It carries out the reaction (2R)-2-phosphoglycerate = phosphoenolpyruvate + H2O. It participates in carbohydrate degradation; glycolysis; pyruvate from D-glyceraldehyde 3-phosphate: step 4/5. In terms of biological role, catalyzes the reversible conversion of 2-phosphoglycerate (2-PG) into phosphoenolpyruvate (PEP). It is essential for the degradation of carbohydrates via glycolysis. In Streptococcus agalactiae serotype Ia (strain ATCC 27591 / A909 / CDC SS700), this protein is Enolase.